A 563-amino-acid chain; its full sequence is Arginine--tRNA ligase (563 aa).

Residues Pro121–His131 carry the 'HIGH' region motif.

It belongs to the class-I aminoacyl-tRNA synthetase family. In terms of assembly, monomer.

It is found in the cytoplasm. It carries out the reaction tRNA(Arg) + L-arginine + ATP = L-arginyl-tRNA(Arg) + AMP + diphosphate. The polypeptide is Arginine--tRNA ligase (Streptococcus pneumoniae (strain ATCC BAA-255 / R6)).